The sequence spans 108 residues: MEQFEAINVEQAYSRWKDGSAALVDIRDPQSFEAGHTPGAFHLTNASLQTFMQQNDFERPVMVMCYHGNSSRSAAQYLLHQGFDAVYSIDGGFEAWARQYPQDVETSA.

Residues 17–105 (KDGSAALVDI…WARQYPQDVE (89 aa)) enclose the Rhodanese domain. The Cysteine persulfide intermediate role is filled by Cys65.

Belongs to the GlpE family.

The protein resides in the cytoplasm. The enzyme catalyses thiosulfate + hydrogen cyanide = thiocyanate + sulfite + 2 H(+). The catalysed reaction is thiosulfate + [thioredoxin]-dithiol = [thioredoxin]-disulfide + hydrogen sulfide + sulfite + 2 H(+). In terms of biological role, transferase that catalyzes the transfer of sulfur from thiosulfate to thiophilic acceptors such as cyanide or dithiols. May function in a CysM-independent thiosulfate assimilation pathway by catalyzing the conversion of thiosulfate to sulfite, which can then be used for L-cysteine biosynthesis. The polypeptide is Thiosulfate sulfurtransferase GlpE (Serratia proteamaculans (strain 568)).